The chain runs to 503 residues: Ferulic acid decarboxylase 1 (503 aa).

Asparagine 170, histidine 193, and glutamate 236 together coordinate Mn(2+). Prenylated FMN contacts are provided by residues 170-175 (NWSIAR), 192-193 (QH), and glutamate 236. Residue glutamate 285 is the Proton donor of the active site. Prenylated FMN is bound at residue lysine 394.

The protein belongs to the UbiD family. UbiD-like/FDC subfamily. As to quaternary structure, homodimer. May form higher order oligomers. The cofactor is Mn(2+). It depends on prenylated FMN as a cofactor.

It is found in the cytoplasm. It catalyses the reaction (E)-4-coumarate + H(+) = 4-vinylphenol + CO2. The enzyme catalyses (E)-cinnamate + H(+) = styrene + CO2. The catalysed reaction is (E)-ferulate + H(+) = 2-methoxy-4-vinylphenol + CO2. In terms of biological role, catalyzes the reversible decarboxylation of aromatic carboxylic acids like ferulic acid, p-coumaric acid or cinnamic acid, producing the corresponding vinyl derivatives 4-vinylphenol, 4-vinylguaiacol, and styrene, respectively, which play the role of aroma metabolites. Not essential for ubiquinone synthesis. This is Ferulic acid decarboxylase 1 from Saccharomyces cerevisiae (strain ATCC 204508 / S288c) (Baker's yeast).